The chain runs to 327 residues: Undecaprenyl-phosphate 4-deoxy-4-formamido-L-arabinose transferase (327 aa).

2 consecutive transmembrane segments (helical) span residues 235-255 (LLSL…VLLV) and 270-290 (VFTL…GMGL).

It belongs to the glycosyltransferase 2 family.

The protein localises to the cell inner membrane. The enzyme catalyses UDP-4-deoxy-4-formamido-beta-L-arabinose + di-trans,octa-cis-undecaprenyl phosphate = 4-deoxy-4-formamido-alpha-L-arabinopyranosyl di-trans,octa-cis-undecaprenyl phosphate + UDP. Its pathway is glycolipid biosynthesis; 4-amino-4-deoxy-alpha-L-arabinose undecaprenyl phosphate biosynthesis; 4-amino-4-deoxy-alpha-L-arabinose undecaprenyl phosphate from UDP-4-deoxy-4-formamido-beta-L-arabinose and undecaprenyl phosphate: step 1/2. It functions in the pathway bacterial outer membrane biogenesis; lipopolysaccharide biosynthesis. Functionally, catalyzes the transfer of 4-deoxy-4-formamido-L-arabinose from UDP to undecaprenyl phosphate. The modified arabinose is attached to lipid A and is required for resistance to polymyxin and cationic antimicrobial peptides. This Yersinia pseudotuberculosis serotype IB (strain PB1/+) protein is Undecaprenyl-phosphate 4-deoxy-4-formamido-L-arabinose transferase.